Reading from the N-terminus, the 53-residue chain is Metallothionein (53 aa).

Belongs to the metallothionein superfamily. Type 14 family.

This protein complexes cadmium, zinc and copper. The sequence is that of Metallothionein from Synechococcus sp.